Consider the following 426-residue polypeptide: MKHLTEMVRQHKAGKTNGIYAVCSAHPLVLEAAIRYASANQTPLLIEATSNQVDQFGGYTGMTPADFRGFVCQLADSLNFPQDALILGGDHLGPNRWQNLPAAQAMANADDLIKSYVAAGFKKIHLDCSMSCQDDPIPLTDDIVAERAARLAKVAEETCLEHFGEADLEYVIGTEVPVPGGAHETLSELAVTTPDAARATLEAHRHAFEKQGLNAIWPRIIALVVQPGVEFDHTNVIDYQPAKATXLSQMXENYETLIFEAHSTDYQTPQSLRQLVIDHFAILKVGPALTFALREALFSLAAIEEELVPAKACSGLRQVLENVMLDRPEYWQSHYHGDGNARRLARGYSYSDRVRYYWPDSQIDDAFAHLVRNLADSPIPLPLISQYLPLQYVKVRSGELQPTPRELIINHIQDILAQYHTACEGQ.

Belongs to the GatZ/KbaZ family. KbaZ subfamily. In terms of assembly, forms a complex with KbaY.

It participates in carbohydrate metabolism; D-tagatose 6-phosphate degradation; D-glyceraldehyde 3-phosphate and glycerone phosphate from D-tagatose 6-phosphate: step 2/2. Component of the tagatose-1,6-bisphosphate aldolase KbaYZ that is required for full activity and stability of the Y subunit. Could have a chaperone-like function for the proper and stable folding of KbaY. When expressed alone, KbaZ does not show any aldolase activity. In Escherichia coli O6:H1 (strain CFT073 / ATCC 700928 / UPEC), this protein is D-tagatose-1,6-bisphosphate aldolase subunit KbaZ.